We begin with the raw amino-acid sequence, 227 residues long: 2,3-bisphosphoglycerate-dependent phosphoglycerate mutase (227 aa).

Residues 7–14 (RHGFSEWN), 20–21 (TG), Arg59, 86–89 (ERHY), Lys97, 113–114 (RR), and 182–183 (GN) contribute to the substrate site. The active-site Tele-phosphohistidine intermediate is His8. The Proton donor/acceptor role is filled by Glu86.

This sequence belongs to the phosphoglycerate mutase family. BPG-dependent PGAM subfamily. Homodimer.

It carries out the reaction (2R)-2-phosphoglycerate = (2R)-3-phosphoglycerate. The protein operates within carbohydrate degradation; glycolysis; pyruvate from D-glyceraldehyde 3-phosphate: step 3/5. Its function is as follows. Catalyzes the interconversion of 2-phosphoglycerate and 3-phosphoglycerate. The sequence is that of 2,3-bisphosphoglycerate-dependent phosphoglycerate mutase from Haemophilus influenzae (strain PittGG).